A 1687-amino-acid chain; its full sequence is A-kinase anchor protein SPHKAP (1687 aa).

Residues 1–14 (MDVNSRLSVQSNVE) show a composition bias toward polar residues. 2 disordered regions span residues 1 to 25 (MDVN…PEPQ) and 272 to 293 (RKHR…ENTS). Residues 914–931 (FAEELAETVVSMATEIAA) are PKA-RII subunit binding domain. The interval 964–989 (LKRKKENSSAGSTVRKHKPPRLSEIK) is disordered. Residues serine 1010, serine 1070, serine 1092, serine 1105, serine 1106, serine 1109, serine 1244, and serine 1273 each carry the phosphoserine modification. Disordered regions lie at residues 1363-1406 (VTEG…SPRR) and 1421-1520 (DQKE…PDDT). Residues 1366–1375 (GNHSPVSSPG) are compositionally biased toward polar residues. Residues 1382-1393 (KPSDFDPRRETS) show a composition bias toward basic and acidic residues. The segment covering 1461–1470 (TAPSTCQSSR) has biased composition (polar residues). Over residues 1482–1494 (EVLKEDIPRDESR) the composition is skewed to basic and acidic residues. The segment covering 1495–1508 (NPPSSSEESTGSWS) has biased composition (low complexity).

Belongs to the AKAP110 family. In terms of assembly, interacts (via the PKA-RII subunit binding domain) with the RI subunit of PKA. Interacts with SPHK1; the interaction greatly reduces SPHK1 activity.

It localises to the cytoplasm. In terms of biological role, anchoring protein that binds preferentially to the type I regulatory subunit of c-AMP-dependent protein kinase (PKA type I) and targets it to distinct subcellular compartments. May act as a converging factor linking cAMP and sphingosine signaling pathways. Plays a regulatory role in the modulation of SPHK1. The sequence is that of A-kinase anchor protein SPHKAP (Sphkap) from Mus musculus (Mouse).